A 216-amino-acid polypeptide reads, in one-letter code: Cyclic AMP receptor protein (216 aa).

6 to 126 (LFHGLAPEEV…HNLAALLARR (121 aa)) contributes to the a nucleoside 3',5'-cyclic phosphate binding site. 3',5'-cyclic AMP is bound by residues 75–78 (GEMS) and 85–86 (RS). The HTH crp-type domain maps to 140–206 (EEARNRVAYA…PGTVEVREAA (67 aa)). A DNA-binding region (H-T-H motif) is located at residues 166 to 185 (HHELAALAGTSRETVSRVLH).

In terms of assembly, homodimer.

Functionally, activates transcription. Positively regulates six promoters upstream of the TTHB186, TTHB147, TTHB178, TTHB159, TTHA0771 and TTHA0176 genes in a cAMP-dependent manner. Regulated genes include clustered regularly interspaced short palindromic repeat (CRISPR) associated (Cas) genes, and the genes encoding a putative transcriptional regulator, a protein containing the exonuclease III-like domain of DNA polymerase, a GCN5-related acetyltransferase homolog, and some T.thermophilus-specific proteins of unknown function. The consensus DNA-binding site of this transcriptional regulator is 5'-(CT)NNG(G/T)(G/T)C(A/C)N(A/T)NNTCACAN(G/C)(G/C)-3' in which N is G, A, T or C. The protein is Cyclic AMP receptor protein of Thermus thermophilus (strain ATCC 27634 / DSM 579 / HB8).